Reading from the N-terminus, the 139-residue chain is GPI-anchored protein 53 (139 aa).

A signal peptide spans 1 to 17; that stretch reads MKFQLLTLVSIATTTLA. 2 stretches are compositionally biased toward low complexity: residues 57–69 and 77–101; these read TITSSSSTTTTTT and TSTTSASSTTTTSTKSNSTSPSSSS. The disordered stretch occupies residues 57–115; the sequence is TITSSSSTTTTTTAKKDKKTTSTTSASSTTTTSTKSNSTSPSSSSSKKHKSETASITKT. N93 carries N-linked (GlcNAc...) asparagine glycosylation. The GPI-anchor amidated glycine moiety is linked to residue G116. The propeptide at 117-139 is removed in mature form; it reads GADSVAAAAAVGGPILAALALLL.

Its subcellular location is the cell membrane. The polypeptide is GPI-anchored protein 53 (PGA53) (Candida albicans (strain SC5314 / ATCC MYA-2876) (Yeast)).